The sequence spans 285 residues: MTNAITGAAIVGGVCGQPIKHSMSPVIHNAWIAAAGLDAAYVPFAPAADRFETFVDGLRGGAVRGLNVTIPFKERALAVADTASDLARMAGAANLLVFNEDGSVHADNTDGPGLLGAIAIQAPGFDVTAAPVVILGAGGAARGAVAALLLAGAPRIAVVNRTVARAQDLADTFGEKVVAKGEDALPALLPEAGLIINATSLGLGGGAGPSADLTLTPKTAVVMDMVYKPLRTEFLRRAEAAGRRTVDGLEMLLRQAIPTFETIYGQAPSPKIDVRVLALKLLGEV.

Residues 22–24 (SMS) and threonine 69 contribute to the shikimate site. Lysine 73 serves as the catalytic Proton acceptor. Aspartate 85 lines the NADP(+) pocket. Residues asparagine 94 and aspartate 110 each contribute to the shikimate site. NADP(+) contacts are provided by residues 136 to 140 (GAGGA), 160 to 165 (NRTVAR), and methionine 225. Tyrosine 227 contacts shikimate. Glycine 248 serves as a coordination point for NADP(+).

The protein belongs to the shikimate dehydrogenase family. As to quaternary structure, homodimer.

It carries out the reaction shikimate + NADP(+) = 3-dehydroshikimate + NADPH + H(+). The protein operates within metabolic intermediate biosynthesis; chorismate biosynthesis; chorismate from D-erythrose 4-phosphate and phosphoenolpyruvate: step 4/7. In terms of biological role, involved in the biosynthesis of the chorismate, which leads to the biosynthesis of aromatic amino acids. Catalyzes the reversible NADPH linked reduction of 3-dehydroshikimate (DHSA) to yield shikimate (SA). The chain is Shikimate dehydrogenase (NADP(+)) from Caulobacter vibrioides (strain ATCC 19089 / CIP 103742 / CB 15) (Caulobacter crescentus).